The sequence spans 435 residues: NAD-specific glutamate dehydrogenase A (435 aa).

Residues 1-28 (MTMASKSDSTHDESGDEAADSTEPESAL) are disordered. A compositionally biased stretch (acidic residues) spans 14-23 (SGDEAADSTE). The active site involves Lys126.

The protein belongs to the Glu/Leu/Phe/Val dehydrogenases family. Homohexamer. Post-translationally, the N-terminus is blocked.

The catalysed reaction is L-glutamate + NAD(+) + H2O = 2-oxoglutarate + NH4(+) + NADH + H(+). With respect to regulation, inhibited by ethanol, acetone, acetonitrile and 2-propanol (65 to 70% inhibition) and to a lesser extent by methanol and dimethyl formamide (26 and 49 % inhibition respectively). No effect of glycerol or DMSO. The polypeptide is NAD-specific glutamate dehydrogenase A (gdhX) (Halobacterium salinarum (Halobacterium halobium)).